A 537-amino-acid polypeptide reads, in one-letter code: uncharacterized protein (537 aa).

Transmembrane regions (helical) follow at residues 5–25, 40–60, 63–83, 115–135, 149–169, and 197–217; these read IGLG…PWFV, LAVA…FFGW, VLWV…MAVV, GLYY…HLEG, VYLL…WVTL, and VGIV…ALVI.

The protein localises to the plastid. The protein resides in the chloroplast membrane. This is an uncharacterized protein from Ostreococcus tauri.